Reading from the N-terminus, the 423-residue chain is Maltoporin 1 (423 aa).

The N-terminal stretch at 1 to 23 is a signal peptide; that stretch reads MNTTLRALSVALAAALIAPSAFA.

It belongs to the porin LamB (TC 1.B.3) family. Homotrimer formed of three 18-stranded antiparallel beta-barrels, containing three independent channels.

Its subcellular location is the cell outer membrane. It catalyses the reaction beta-maltose(in) = beta-maltose(out). Functionally, involved in the transport of maltose and maltodextrins. This Klebsiella pneumoniae subsp. pneumoniae (strain ATCC 700721 / MGH 78578) protein is Maltoporin 1.